Consider the following 344-residue polypeptide: S-adenosylmethionine:tRNA ribosyltransferase-isomerase (344 aa).

The protein belongs to the QueA family. As to quaternary structure, monomer.

It localises to the cytoplasm. The enzyme catalyses 7-aminomethyl-7-carbaguanosine(34) in tRNA + S-adenosyl-L-methionine = epoxyqueuosine(34) in tRNA + adenine + L-methionine + 2 H(+). It participates in tRNA modification; tRNA-queuosine biosynthesis. Functionally, transfers and isomerizes the ribose moiety from AdoMet to the 7-aminomethyl group of 7-deazaguanine (preQ1-tRNA) to give epoxyqueuosine (oQ-tRNA). The protein is S-adenosylmethionine:tRNA ribosyltransferase-isomerase of Pediococcus pentosaceus (strain ATCC 25745 / CCUG 21536 / LMG 10740 / 183-1w).